The chain runs to 397 residues: Multidrug efflux pump subunit AcrA (397 aa).

The signal sequence occupies residues 1–24; it reads MNKNRGFTPLAVVLMLSGSLALTG. Residue Cys-25 is the site of N-palmitoyl cysteine attachment. A lipid anchor (S-diacylglycerol cysteine) is attached at Cys-25. Residues 98-172 are a coiled coil; that stretch reads PATYQATYDS…AVETARINLA (75 aa). Residues 377–397 form a disordered region; it reads EVTADNNQQAASGAQPEQSKS. The segment covering 379-397 has biased composition (polar residues); sequence TADNNQQAASGAQPEQSKS.

It belongs to the membrane fusion protein (MFP) (TC 8.A.1) family. Monomeric in solution. Homotrimeric; interacts independently with AcrB and TolC as well as AcrZ. Part of the AcrA-AcrB-TolC efflux pump.

The protein localises to the cell inner membrane. Its function is as follows. AcrA-AcrB-AcrZ-TolC is a drug efflux protein complex with broad substrate specificity that uses the proton motive force to export substrates. This subunit may act as an adapter protein that links AcrB and TolC stably together. In Escherichia coli O157:H7, this protein is Multidrug efflux pump subunit AcrA (acrA).